A 310-amino-acid polypeptide reads, in one-letter code: tRNA dimethylallyltransferase (310 aa).

15 to 22 (GATASGKT) lines the ATP pocket. Residue 17–22 (TASGKT) coordinates substrate.

The protein belongs to the IPP transferase family. As to quaternary structure, monomer. Mg(2+) serves as cofactor.

It carries out the reaction adenosine(37) in tRNA + dimethylallyl diphosphate = N(6)-dimethylallyladenosine(37) in tRNA + diphosphate. In terms of biological role, catalyzes the transfer of a dimethylallyl group onto the adenine at position 37 in tRNAs that read codons beginning with uridine, leading to the formation of N6-(dimethylallyl)adenosine (i(6)A). In Nocardioides sp. (strain ATCC BAA-499 / JS614), this protein is tRNA dimethylallyltransferase.